Consider the following 420-residue polypeptide: Glucose-1-phosphate adenylyltransferase (420 aa).

Alpha-D-glucose 1-phosphate-binding positions include Tyr-107, Gly-173, 188–189 (EK), and Ser-206.

Belongs to the bacterial/plant glucose-1-phosphate adenylyltransferase family. As to quaternary structure, homotetramer.

The catalysed reaction is alpha-D-glucose 1-phosphate + ATP + H(+) = ADP-alpha-D-glucose + diphosphate. It participates in glycan biosynthesis; glycogen biosynthesis. Its function is as follows. Involved in the biosynthesis of ADP-glucose, a building block required for the elongation reactions to produce glycogen. Catalyzes the reaction between ATP and alpha-D-glucose 1-phosphate (G1P) to produce pyrophosphate and ADP-Glc. The polypeptide is Glucose-1-phosphate adenylyltransferase (Shewanella sp. (strain ANA-3)).